Reading from the N-terminus, the 133-residue chain is Peptide methionine sulfoxide reductase MsrB (133 aa).

Over residues 1–12 (MSEKVQKSEHEW) the composition is skewed to basic and acidic residues. Residues 1-36 (MSEKVQKSEHEWQQQLTPEQYRVTREKGTERPFTGD) form a disordered region. The 124-residue stretch at 9–132 (EHEWQQQLTP…NSVSLDFHPG (124 aa)) folds into the MsrB domain. Zn(2+)-binding residues include Cys-48, Cys-51, Cys-97, and Cys-100. Cys-121 acts as the Nucleophile in catalysis.

Belongs to the MsrB Met sulfoxide reductase family. Zn(2+) serves as cofactor.

It catalyses the reaction L-methionyl-[protein] + [thioredoxin]-disulfide + H2O = L-methionyl-(R)-S-oxide-[protein] + [thioredoxin]-dithiol. The protein is Peptide methionine sulfoxide reductase MsrB of Chromohalobacter salexigens (strain ATCC BAA-138 / DSM 3043 / CIP 106854 / NCIMB 13768 / 1H11).